An 876-amino-acid polypeptide reads, in one-letter code: AP-5 complex subunit beta-1 (876 aa).

As to quaternary structure, probably part of the adaptor protein complex 5 (AP-5), a tetramer composed of AP5B1, AP5M1, AP5S1 and AP5Z1. Interacts with ZFYVE26 and SPG11.

Functionally, as part of AP-5, a probable fifth adaptor protein complex it may be involved in endosomal transport. This Mus musculus (Mouse) protein is AP-5 complex subunit beta-1 (Ap5b1).